A 331-amino-acid chain; its full sequence is Major ferric iron-binding protein (331 aa).

Positions 1–22 (MKTSIRYALLAAALTAATPALA) are cleaved as a signal peptide. The Fe cation site is built by H31, E79, Y217, and Y218.

This sequence belongs to the bacterial solute-binding protein 1 family.

The protein resides in the periplasm. In terms of biological role, this protein may be a central component in the iron-acquisition system. This is Major ferric iron-binding protein (fbpA) from Neisseria meningitidis serogroup B (strain ATCC BAA-335 / MC58).